Consider the following 243-residue polypeptide: Probable transcriptional regulatory protein TTE1135 (243 aa).

It belongs to the TACO1 family.

It localises to the cytoplasm. In Caldanaerobacter subterraneus subsp. tengcongensis (strain DSM 15242 / JCM 11007 / NBRC 100824 / MB4) (Thermoanaerobacter tengcongensis), this protein is Probable transcriptional regulatory protein TTE1135.